Reading from the N-terminus, the 236-residue chain is Purine nucleoside phosphorylase DeoD-type (236 aa).

Residue His5 participates in a purine D-ribonucleoside binding. Phosphate contacts are provided by residues Gly21, Arg25, Arg44, and 88–91 (RVGT). Residues 180-182 (EME) and 204-205 (SD) each bind a purine D-ribonucleoside. Asp205 functions as the Proton donor in the catalytic mechanism.

It belongs to the PNP/UDP phosphorylase family. As to quaternary structure, homohexamer; trimer of homodimers.

It catalyses the reaction a purine D-ribonucleoside + phosphate = a purine nucleobase + alpha-D-ribose 1-phosphate. It carries out the reaction a purine 2'-deoxy-D-ribonucleoside + phosphate = a purine nucleobase + 2-deoxy-alpha-D-ribose 1-phosphate. Functionally, catalyzes the reversible phosphorolytic breakdown of the N-glycosidic bond in the beta-(deoxy)ribonucleoside molecules, with the formation of the corresponding free purine bases and pentose-1-phosphate. The chain is Purine nucleoside phosphorylase DeoD-type from Shewanella frigidimarina (strain NCIMB 400).